A 75-amino-acid chain; its full sequence is MMSKLGVLLTICLLLFPLTALPMDGDEPANRPVERMQDNISSEQYPLFEKRRDCCTPPKKCKDRQCKPQRCCAGR.

Positions methionine 1–alanine 20 are cleaved as a signal peptide. A propeptide spanning residues leucine 21–arginine 51 is cleaved from the precursor. Intrachain disulfides connect cysteine 54-cysteine 66, cysteine 55-cysteine 71, and cysteine 61-cysteine 72. Residues proline 57 and proline 58 each carry the 4-hydroxyproline; partial modification. A 4-hydroxyproline modification is found at proline 68. Alanine 73 bears the Alanine amide mark.

The protein belongs to the conotoxin M superfamily. Post-translationally, hydroxylated; hydroxylations improve the ability to block Nav1.4/SCN4A sodium channels but does not affect folding. In terms of tissue distribution, expressed by the venom duct.

It is found in the secreted. Its function is as follows. Mu-conotoxins block voltage-gated sodium channels (Nav). This toxin potently blocks rat Nav1.4/SCN4A (IC(50)= 19-110 nM). It also moderately blocks rNav1.1/SCN1A (Kd=260 nM), rNav1.2/SCN2A (IC(50)=2.7-17.8 uM), and mNav1.6/SCN8A (IC(50)=680 nM). The inhibition is reversible. In vivo, induces paralysis to an isolated skeletal muscle preparation from frog (cutaneous pectoralis) within a few minutes. The protein is Mu-conotoxin GIIIA of Conus geographus (Geography cone).